The chain runs to 942 residues: Lon protease homolog 4, chloroplastic/mitochondrial (942 aa).

Ser-54 is subject to Phosphoserine. Positions 79–301 (VIALPLPHKP…LTLELVKKEV (223 aa)) constitute a Lon N-terminal domain. Residue 456–463 (GPTGVGKT) coordinates ATP. Residues 673–725 (ISDDVTTDTEETKSLAKTDLESPETSAEGSTVLTDELATGDPTESTTEQSGEV) are disordered. Positions 682 to 692 (EETKSLAKTDL) are enriched in basic and acidic residues. Residues 695-705 (PETSAEGSTVL) show a composition bias toward polar residues. The Lon proteolytic domain occupies 756-940 (QTPVGVVMGL…EQIFELAFGY (185 aa)). Catalysis depends on residues Ser-846 and Lys-889.

The protein belongs to the peptidase S16 family. As to quaternary structure, homohexamer or homoheptamer. Organized in a ring with a central cavity.

The protein localises to the mitochondrion matrix. It is found in the plastid. It localises to the chloroplast thylakoid membrane. The enzyme catalyses Hydrolysis of proteins in presence of ATP.. In terms of biological role, ATP-dependent serine protease that mediates the selective degradation of misfolded, unassembled or oxidatively damaged polypeptides as well as certain short-lived regulatory proteins in the mitochondrial matrix. May also have a chaperone function in the assembly of inner membrane protein complexes. Participates in the regulation of mitochondrial gene expression and in the maintenance of the integrity of the mitochondrial genome. Binds to mitochondrial DNA in a site-specific manner. This chain is Lon protease homolog 4, chloroplastic/mitochondrial (LON4), found in Arabidopsis thaliana (Mouse-ear cress).